The primary structure comprises 321 residues: Porphobilinogen deaminase (321 aa).

Position 246 is an S-(dipyrrolylmethanemethyl)cysteine (Cys246).

Belongs to the HMBS family. As to quaternary structure, monomer. It depends on dipyrromethane as a cofactor.

It catalyses the reaction 4 porphobilinogen + H2O = hydroxymethylbilane + 4 NH4(+). It participates in porphyrin-containing compound metabolism; protoporphyrin-IX biosynthesis; coproporphyrinogen-III from 5-aminolevulinate: step 2/4. Its function is as follows. Tetrapolymerization of the monopyrrole PBG into the hydroxymethylbilane pre-uroporphyrinogen in several discrete steps. The polypeptide is Porphobilinogen deaminase (Helicobacter hepaticus (strain ATCC 51449 / 3B1)).